The primary structure comprises 151 residues: 3-hydroxyacyl-[acyl-carrier-protein] dehydratase FabZ (151 aa).

Histidine 52 is an active-site residue.

This sequence belongs to the thioester dehydratase family. FabZ subfamily.

The protein resides in the cytoplasm. The enzyme catalyses a (3R)-hydroxyacyl-[ACP] = a (2E)-enoyl-[ACP] + H2O. Its function is as follows. Involved in unsaturated fatty acids biosynthesis. Catalyzes the dehydration of short chain beta-hydroxyacyl-ACPs and long chain saturated and unsaturated beta-hydroxyacyl-ACPs. This chain is 3-hydroxyacyl-[acyl-carrier-protein] dehydratase FabZ (fabZ1), found in Lactococcus lactis subsp. lactis (strain IL1403) (Streptococcus lactis).